The sequence spans 61 residues: MATTSAEAKMRKPQKFATRYRNRCRLCGRPRGYYRDFGICRICLRKLAYNGEIPGVTKSSW.

C24, C27, C40, and C43 together coordinate Zn(2+).

It belongs to the universal ribosomal protein uS14 family. Zinc-binding uS14 subfamily. As to quaternary structure, part of the 30S ribosomal subunit. Contacts proteins S3 and S10. Zn(2+) is required as a cofactor.

Binds 16S rRNA, required for the assembly of 30S particles and may also be responsible for determining the conformation of the 16S rRNA at the A site. The protein is Small ribosomal subunit protein uS14 of Endomicrobium trichonymphae.